The sequence spans 341 residues: Anthranilate phosphoribosyltransferase (341 aa).

Residues glycine 79, 82–83, threonine 87, 89–92, 107–115, and serine 119 each bind 5-phospho-alpha-D-ribose 1-diphosphate; these read GD, NIST, and KHGNRAVSS. An anthranilate-binding site is contributed by glycine 79. Residue serine 91 coordinates Mg(2+). Asparagine 110 is an anthranilate binding site. Arginine 165 is an anthranilate binding site. Mg(2+)-binding residues include aspartate 224 and glutamate 225.

It belongs to the anthranilate phosphoribosyltransferase family. Homodimer. It depends on Mg(2+) as a cofactor.

The enzyme catalyses N-(5-phospho-beta-D-ribosyl)anthranilate + diphosphate = 5-phospho-alpha-D-ribose 1-diphosphate + anthranilate. The protein operates within amino-acid biosynthesis; L-tryptophan biosynthesis; L-tryptophan from chorismate: step 2/5. Functionally, catalyzes the transfer of the phosphoribosyl group of 5-phosphorylribose-1-pyrophosphate (PRPP) to anthranilate to yield N-(5'-phosphoribosyl)-anthranilate (PRA). This chain is Anthranilate phosphoribosyltransferase, found in Bacillus cereus (strain AH820).